Reading from the N-terminus, the 404-residue chain is Keratin, type I cuticular Ha3-II (404 aa).

Positions 1–56 are head; it reads MPYNFCLPSLSCRTSCSSRPCVPPSCHGYTLPGACNIPANVSNCNWFCEGSFNGSE. One can recognise an IF rod domain in the interval 56 to 367; the sequence is EKETMQFLND…SLLESEDCKL (312 aa). The coil 1A stretch occupies residues 57–91; the sequence is KETMQFLNDRLASYLEKVRQLERDNAELENLIRER. A linker 1 region spans residues 92–102; that stretch reads SQQQEPLLCPS. The interval 103 to 203 is coil 1B; it reads YQSYFKTIEE…HEQEVNTLRC (101 aa). The tract at residues 204-219 is linker 12; that stretch reads QLGDRLNVEVDAAPAV. Positions 220–363 are coil 2; that stretch reads DLNQVLNETR…NTYRSLLESE (144 aa). The interval 364–404 is tail; sequence DCKLPSNPCATTNACEKPIGSCVTNPCGPRSRCGPCNTFGY.

This sequence belongs to the intermediate filament family.

In Homo sapiens (Human), this protein is Keratin, type I cuticular Ha3-II (KRT33B).